Here is a 393-residue protein sequence, read N- to C-terminus: Cyclin CCL1 (393 aa).

Positions 1-19 (MTDIQLNGKSTLDTPSATM) are enriched in polar residues. Disordered regions lie at residues 1–45 (MTDI…RISD) and 289–325 (SREGSQESVPGNEKEEPQNDASTTEKNKEKSTESEEY). Composition is skewed to basic and acidic residues over residues 21-35 (AKEKEAKLKSADENN) and 300-321 (NEKEEPQNDASTTEKNKEKSTE).

This sequence belongs to the cyclin family. Cyclin C subfamily. As to quaternary structure, CCL1 and KIN28 form the TFIIK complex, a component of TFIIH holo complex. Component of a complex consisting of KIN28, CCL1 and TFB3.

Functionally, regulatory component of the TFIIK complex (KIN28-CCL1 dimer) which is the protein kinase component of transcription factor IIH (TFIIH) and phosphorylates the C-terminal domain of RNA polymerase II during transition from transcription to elongation after preinitiation complex (PIC) formation, thereby positively regulating transcription. TFIIH (or factor B) is essential for both basal and activated transcription, and is involved in nucleotide excision repair (NER) of damaged DNA. TFIIH has DNA-dependent ATPase activity and is essential for polymerase II transcription in vitro. In Saccharomyces cerevisiae (strain ATCC 204508 / S288c) (Baker's yeast), this protein is Cyclin CCL1 (CCL1).